The primary structure comprises 118 residues: Large ribosomal subunit protein bL20 (118 aa).

It belongs to the bacterial ribosomal protein bL20 family.

Functionally, binds directly to 23S ribosomal RNA and is necessary for the in vitro assembly process of the 50S ribosomal subunit. It is not involved in the protein synthesizing functions of that subunit. This is Large ribosomal subunit protein bL20 from Pelagibacter ubique (strain HTCC1062).